A 344-amino-acid polypeptide reads, in one-letter code: MRNVQAQPLVSPTEPMIDPFGRAVTYLRVSVTDRCDFRCTYCMAEHMTFLPKKDLLTLEELDRLCSVFIEKGVRKLRLTGGEPLVRKNIMHLIGNLSRHLKSGALDELTLTTNGSQLARFAGELADCGVRRINVSLDTLNPEKFRTITRWGDLSRVLEGIDAAQKAGIHVKINAVALKDFNDAEIPELIRWAHGRGMDVTLIETMPMGEIEFDRTDQYLPLSQVRADLASQFTLADIPYRTGGPARYVTISETGGRLGFITPMTHNFCESCNRVRLTCTGMLYMCLGQNDDADLRKALRESESDEHLSQAIDEAISRKPKGHDFIIDREHNRPSVARHMSLTGG.

Residues P19–A245 form the Radical SAM core domain. R28 contacts GTP. [4Fe-4S] cluster contacts are provided by C35 and C39. S-adenosyl-L-methionine is bound at residue Y41. C42 is a [4Fe-4S] cluster binding site. R77 is a binding site for GTP. S-adenosyl-L-methionine is bound at residue G81. Residue T111 participates in GTP binding. Residue S135 coordinates S-adenosyl-L-methionine. A GTP-binding site is contributed by K171. M205 provides a ligand contact to S-adenosyl-L-methionine. Positions 268 and 271 each coordinate [4Fe-4S] cluster. R273–R275 contacts GTP. C285 contacts [4Fe-4S] cluster.

It belongs to the radical SAM superfamily. MoaA family. Monomer and homodimer. The cofactor is [4Fe-4S] cluster.

It catalyses the reaction GTP + AH2 + S-adenosyl-L-methionine = (8S)-3',8-cyclo-7,8-dihydroguanosine 5'-triphosphate + 5'-deoxyadenosine + L-methionine + A + H(+). Its pathway is cofactor biosynthesis; molybdopterin biosynthesis. Functionally, catalyzes the cyclization of GTP to (8S)-3',8-cyclo-7,8-dihydroguanosine 5'-triphosphate. The protein is GTP 3',8-cyclase of Brucella canis (strain ATCC 23365 / NCTC 10854 / RM-666).